Consider the following 334-residue polypeptide: 5-formaminoimidazole-4-carboxamide-1-(beta)-D-ribofuranosyl 5'-monophosphate synthetase (334 aa).

Residues Ser-10, His-11, Ser-71, and His-75 each coordinate 5-amino-1-(5-phospho-beta-D-ribosyl)imidazole-4-carboxamide. One can recognise an ATP-grasp domain in the interval 78–325; that stretch reads IELVENMKVP…IAMEIREAIE (248 aa). Residues 132 to 142, 173 to 176, and Glu-204 each bind ATP; these read KPHGAKGGKGY and QEYV. Asn-232 is a binding site for 5-amino-1-(5-phospho-beta-D-ribosyl)imidazole-4-carboxamide. Residues Glu-270 and Glu-283 each coordinate Mg(2+).

Belongs to the phosphohexose mutase family. Homotrimer and homohexamer. Requires Mg(2+) as cofactor. It depends on Mn(2+) as a cofactor.

It catalyses the reaction 5-amino-1-(5-phospho-beta-D-ribosyl)imidazole-4-carboxamide + formate + ATP = 5-formamido-1-(5-phospho-D-ribosyl)imidazole-4-carboxamide + ADP + phosphate. Its pathway is purine metabolism; IMP biosynthesis via de novo pathway; 5-formamido-1-(5-phospho-D-ribosyl)imidazole-4-carboxamide from 5-amino-1-(5-phospho-D-ribosyl)imidazole-4-carboxamide (formate route): step 1/1. Functionally, catalyzes the ATP- and formate-dependent formylation of 5-aminoimidazole-4-carboxamide-1-beta-d-ribofuranosyl 5'-monophosphate (AICAR) to 5-formaminoimidazole-4-carboxamide-1-beta-d-ribofuranosyl 5'-monophosphate (FAICAR) in the absence of folates. The sequence is that of 5-formaminoimidazole-4-carboxamide-1-(beta)-D-ribofuranosyl 5'-monophosphate synthetase from Pyrococcus furiosus (strain ATCC 43587 / DSM 3638 / JCM 8422 / Vc1).